Reading from the N-terminus, the 103-residue chain is Large ribosomal subunit protein bL21 (103 aa).

This sequence belongs to the bacterial ribosomal protein bL21 family. As to quaternary structure, part of the 50S ribosomal subunit. Contacts protein L20.

Its function is as follows. This protein binds to 23S rRNA in the presence of protein L20. The sequence is that of Large ribosomal subunit protein bL21 from Chromohalobacter salexigens (strain ATCC BAA-138 / DSM 3043 / CIP 106854 / NCIMB 13768 / 1H11).